Here is a 225-residue protein sequence, read N- to C-terminus: Orotate phosphoribosyltransferase (225 aa).

Residues lysine 26, 73–74, arginine 100, lysine 101, lysine 104, histidine 106, and 127–135 each bind 5-phospho-alpha-D-ribose 1-diphosphate; these read YK and EDVTTAGTS. Positions 131 and 160 each coordinate orotate.

This sequence belongs to the purine/pyrimidine phosphoribosyltransferase family. PyrE subfamily. In terms of assembly, homodimer. The cofactor is Mg(2+).

The catalysed reaction is orotidine 5'-phosphate + diphosphate = orotate + 5-phospho-alpha-D-ribose 1-diphosphate. It participates in pyrimidine metabolism; UMP biosynthesis via de novo pathway; UMP from orotate: step 1/2. Its function is as follows. Catalyzes the transfer of a ribosyl phosphate group from 5-phosphoribose 1-diphosphate to orotate, leading to the formation of orotidine monophosphate (OMP). This is Orotate phosphoribosyltransferase from Lachnoclostridium phytofermentans (strain ATCC 700394 / DSM 18823 / ISDg) (Clostridium phytofermentans).